The sequence spans 398 residues: Type II secretion system protein L (398 aa).

Topologically, residues 1 to 248 (MNNHHTSSAA…RQPTPRRWRP (248 aa)) are cytoplasmic. A helical transmembrane segment spans residues 249–265 (VIVAALALLLLWSSNCL). Over 266–398 (HDHLMLGQQA…GRLTLEGNDA (133 aa)) the chain is Periplasmic.

It belongs to the GSP L family. Type II secretion system is composed of four main components: the outer membrane complex, the inner membrane complex, the cytoplasmic secretion ATPase and the periplasm-spanning pseudopilus. Forms homodimers. Interacts with PulM/GspM. Interacts with PulE/GspE and PulF/GspF.

Its subcellular location is the cell inner membrane. Functionally, inner membrane component of the type II secretion system required for the energy-dependent secretion of extracellular factors such as proteases and toxins from the periplasm. Plays a role in the complex assembly and recruits PulM resulting in a stable complex in the inner membrane. Provides thus a link between the energy-providing PulE protein in the cytoplasm and the rest of the T2SS machinery. The protein is Type II secretion system protein L (pulL) of Klebsiella pneumoniae.